The primary structure comprises 405 residues: MMFKHLVPLRNGFNKERTSRLKARLFFLSTIFGSILLVFFFCEFLVYYLVIVKCSWPEVKGAHKEDSTPVLKVMFLADTHLLGEIRGHWLDKLRREWQMERSYQSALWLLQPDIVFILGDVFDEGKWSIPQAWSSDVARFQKMFRHPPHTQLIVLVGNHDIGFHYDMTVYKLSRFEKTFNFTSGKLVSPKGINHILSSSFVLLNSMALEGDDCHICRAAEDQLRRISIKLNCSRMREHPDFQKKCKNVEKTPVSAPILLQHYPLYRISDSECTGEDSASPEEKKVLFKEKYDVLSQDASEKLLQLLQPRLILSGHTHSACEVLHQGKIPEISVPSFSWRNRNNPSFIMGSITATKYSLAKCFLPTENTIIYIYCTASVLLTGYVLACLWLCICQRIHSGRKQKPI.

A helical transmembrane segment spans residues isoleucine 31–isoleucine 51. The a divalent metal cation site is built by aspartate 78, aspartate 120, asparagine 158, histidine 261, histidine 315, and histidine 317. Residues isoleucine 369–tryptophan 389 traverse the membrane as a helical segment.

The protein belongs to the metallophosphoesterase superfamily. MPPE1 family. Requires Mn(2+) as cofactor.

The protein localises to the endoplasmic reticulum-Golgi intermediate compartment membrane. Metallophosphoesterase that catalyzes the removal of a side-chain ethanolamine-phosphate (EtNP) from the second mannose of the GPI-anchor protein intermediate. Participates in the glycan remodeling steps of GPI-anchor maturation to allow an efficient transport of GPI-anchor proteins from the endoplasmic reticulum to the Golgi. The chain is Metallophosphoesterase 1 from Xenopus laevis (African clawed frog).